The primary structure comprises 397 residues: Lymphoid enhancer-binding factor 1 (397 aa).

A CTNNB1-binding region spans residues 1-60 (MPQLSGGGGGGDPELCATDEMIPFKDEGDPQKEKIFAEISHPEEEGDLADIKSSLVNESE). Lys-25 is covalently cross-linked (Glycyl lysine isopeptide (Lys-Gly) (interchain with G-Cter in SUMO)). Positions 38 to 102 (EISHPEEEGD…KHPDGGLYNK (65 aa)) are disordered. Basic and acidic residues predominate over residues 80–96 (PYHDKAREHPDDGKHPD). Ser-130 carries the phosphoserine modification. Residue Thr-153 is modified to Phosphothreonine; by NLK. Ser-164 is subject to Phosphoserine; by NLK. Disordered stretches follow at residues 164-190 (SPGS…PAPE) and 266-296 (VKQE…KRPH). Residue Lys-267 forms a Glycyl lysine isopeptide (Lys-Gly) (interchain with G-Cter in SUMO) linkage. The span at 267 to 294 (KQEHPHTDSDLMHVKPEHEQRKEQEPKR) shows a compositional bias: basic and acidic residues. A DNA-binding region (HMG box) is located at residues 297–365 (IKKPLNAFML…LHMQLYPGWS (69 aa)). Residues 367–397 (RDNYGKKKKRKREKLQESTSGTGPRMTAAYI) form a disordered region.

It belongs to the TCF/LEF family. In terms of assembly, binds the armadillo repeat of CTNNB1 and forms a stable complex. Interacts with TLE1, PIASG, ALYREF/THOC4, EP300, MDFI and MDFIC. Interacts with DAZAP2. Post-translationally, phosphorylated at Thr-153 and/or Ser-164 by NLK. Phosphorylation by NLK at these sites represses LEF1-mediated transcriptional activation of target genes of the canonical Wnt signaling pathway.

It localises to the nucleus. Functionally, transcription factor that binds DNA in a sequence-specific manner. Participates in the Wnt signaling pathway. Activates transcription of target genes in the presence of CTNNB1 and EP300. PIASG antagonizes both Wnt-dependent and Wnt-independent activation by LEF1. TLE1, TLE2, TLE3 and TLE4 repress transactivation mediated by LEF1 and CTNNB1. Regulates T-cell receptor alpha enhancer function. Required for IL17A expressing gamma-delta T-cell maturation and development, via binding to regulator loci of BLK to modulate expression. Acts as a positive regulator of odontoblast differentiation during mesenchymal tooth germ formation, expression is repressed during the bell stage by MSX1-mediated inhibition of CTNNB1 signaling. May play a role in hair cell differentiation and follicle morphogenesis. The protein is Lymphoid enhancer-binding factor 1 of Rattus norvegicus (Rat).